We begin with the raw amino-acid sequence, 135 residues long: Histone H2A (135 aa).

It belongs to the histone H2A family. The nucleosome is a histone octamer containing two molecules each of H2A, H2B, H3 and H4 assembled in one H3-H4 heterotetramer and two H2A-H2B heterodimers. The octamer wraps approximately 147 bp of DNA.

Its subcellular location is the nucleus. It is found in the chromosome. Functionally, core component of nucleosome. Nucleosomes wrap and compact DNA into chromatin, limiting DNA accessibility to the cellular machineries which require DNA as a template. Histones thereby play a central role in transcription regulation, DNA repair, DNA replication and chromosomal stability. DNA accessibility is regulated via a complex set of post-translational modifications of histones, also called histone code, and nucleosome remodeling. This is Histone H2A from Trypanosoma cruzi.